The chain runs to 399 residues: Imidazolonepropionase (399 aa).

Residues His-74 and His-76 each contribute to the Fe(3+) site. The Zn(2+) site is built by His-74 and His-76. Residues Arg-83, Tyr-146, and His-176 each contribute to the 4-imidazolone-5-propanoate site. Tyr-146 contacts N-formimidoyl-L-glutamate. Fe(3+) is bound at residue His-238. His-238 is a Zn(2+) binding site. Gln-241 lines the 4-imidazolone-5-propanoate pocket. Asp-312 is a Fe(3+) binding site. Position 312 (Asp-312) interacts with Zn(2+). N-formimidoyl-L-glutamate-binding residues include Asn-314 and Gly-316. Residue Ser-317 participates in 4-imidazolone-5-propanoate binding.

It belongs to the metallo-dependent hydrolases superfamily. HutI family. It depends on Zn(2+) as a cofactor. Fe(3+) is required as a cofactor.

Its subcellular location is the cytoplasm. It carries out the reaction 4-imidazolone-5-propanoate + H2O = N-formimidoyl-L-glutamate. The protein operates within amino-acid degradation; L-histidine degradation into L-glutamate; N-formimidoyl-L-glutamate from L-histidine: step 3/3. Functionally, catalyzes the hydrolytic cleavage of the carbon-nitrogen bond in imidazolone-5-propanoate to yield N-formimidoyl-L-glutamate. It is the third step in the universal histidine degradation pathway. The polypeptide is Imidazolonepropionase (Deinococcus deserti (strain DSM 17065 / CIP 109153 / LMG 22923 / VCD115)).